We begin with the raw amino-acid sequence, 467 residues long: Asparagine--tRNA ligase (467 aa).

It belongs to the class-II aminoacyl-tRNA synthetase family. As to quaternary structure, homodimer.

The protein localises to the cytoplasm. It carries out the reaction tRNA(Asn) + L-asparagine + ATP = L-asparaginyl-tRNA(Asn) + AMP + diphosphate + H(+). In Bacteroides fragilis (strain ATCC 25285 / DSM 2151 / CCUG 4856 / JCM 11019 / LMG 10263 / NCTC 9343 / Onslow / VPI 2553 / EN-2), this protein is Asparagine--tRNA ligase.